Reading from the N-terminus, the 373-residue chain is Dual-specificity RNA methyltransferase RlmN (373 aa).

The Proton acceptor role is filled by E94. The Radical SAM core domain occupies 100–339 (DGDRATLCVS…VTVRKTRGDD (240 aa)). A disulfide bridge connects residues C107 and C344. Positions 114, 118, and 121 each coordinate [4Fe-4S] cluster. Residues 168–169 (GE), S200, 222–224 (SLH), and N301 each bind S-adenosyl-L-methionine. C344 functions as the S-methylcysteine intermediate in the catalytic mechanism.

This sequence belongs to the radical SAM superfamily. RlmN family. The cofactor is [4Fe-4S] cluster.

Its subcellular location is the cytoplasm. It carries out the reaction adenosine(2503) in 23S rRNA + 2 reduced [2Fe-2S]-[ferredoxin] + 2 S-adenosyl-L-methionine = 2-methyladenosine(2503) in 23S rRNA + 5'-deoxyadenosine + L-methionine + 2 oxidized [2Fe-2S]-[ferredoxin] + S-adenosyl-L-homocysteine. The enzyme catalyses adenosine(37) in tRNA + 2 reduced [2Fe-2S]-[ferredoxin] + 2 S-adenosyl-L-methionine = 2-methyladenosine(37) in tRNA + 5'-deoxyadenosine + L-methionine + 2 oxidized [2Fe-2S]-[ferredoxin] + S-adenosyl-L-homocysteine. In terms of biological role, specifically methylates position 2 of adenine 2503 in 23S rRNA and position 2 of adenine 37 in tRNAs. m2A2503 modification seems to play a crucial role in the proofreading step occurring at the peptidyl transferase center and thus would serve to optimize ribosomal fidelity. This Photobacterium profundum (strain SS9) protein is Dual-specificity RNA methyltransferase RlmN.